Here is a 258-residue protein sequence, read N- to C-terminus: MDADEPEILVTNDDGIDAPGIRALADGLDAVGNVTVVAPADNQSATGRAMSQEVAVHDHDLGYAVEGTPADCVVAGLEALGPYPDLVVSGVNEGGNLGMYVLGRSGTVSAAVEAAFFGVPAIAVSMYMREEQFGEPTAVADYEHAVDATTHLAHDAVTDGIFDTADYLNVNAPHPDADATGEMVVTRPSHAYDMTAAQTGDTVTLYDRLWEAMAAGDIHDPDGTDRRAVLDGHVSVSPLTAPHSTEHHDALDGIATEF.

A divalent metal cation-binding residues include D13, D14, S44, and N92. The segment at 237–258 (SPLTAPHSTEHHDALDGIATEF) is disordered.

The protein belongs to the SurE nucleotidase family. It depends on a divalent metal cation as a cofactor.

It localises to the cytoplasm. The enzyme catalyses a ribonucleoside 5'-phosphate + H2O = a ribonucleoside + phosphate. Its function is as follows. Nucleotidase that shows phosphatase activity on nucleoside 5'-monophosphates. This chain is 5'-nucleotidase SurE, found in Halobacterium salinarum (strain ATCC 29341 / DSM 671 / R1).